The primary structure comprises 157 residues: Small ribosomal subunit protein uS7 (157 aa).

It belongs to the universal ribosomal protein uS7 family. As to quaternary structure, part of the 30S ribosomal subunit. Contacts proteins S9 and S11.

Functionally, one of the primary rRNA binding proteins, it binds directly to 16S rRNA where it nucleates assembly of the head domain of the 30S subunit. Is located at the subunit interface close to the decoding center, probably blocks exit of the E-site tRNA. This is Small ribosomal subunit protein uS7 from Blochmanniella floridana.